The chain runs to 274 residues: Ribosomal RNA small subunit methyltransferase A (274 aa).

S-adenosyl-L-methionine is bound by residues asparagine 27, leucine 29, glycine 54, glutamate 75, aspartate 100, and asparagine 121.

It belongs to the class I-like SAM-binding methyltransferase superfamily. rRNA adenine N(6)-methyltransferase family. RsmA subfamily.

Its subcellular location is the cytoplasm. The enzyme catalyses adenosine(1518)/adenosine(1519) in 16S rRNA + 4 S-adenosyl-L-methionine = N(6)-dimethyladenosine(1518)/N(6)-dimethyladenosine(1519) in 16S rRNA + 4 S-adenosyl-L-homocysteine + 4 H(+). Its function is as follows. Specifically dimethylates two adjacent adenosines (A1518 and A1519) in the loop of a conserved hairpin near the 3'-end of 16S rRNA in the 30S particle. May play a critical role in biogenesis of 30S subunits. This chain is Ribosomal RNA small subunit methyltransferase A, found in Acinetobacter baylyi (strain ATCC 33305 / BD413 / ADP1).